Reading from the N-terminus, the 465-residue chain is UDP-N-acetylmuramate--L-alanine ligase (465 aa).

115 to 121 contributes to the ATP binding site; it reads GAHGKTT.

It belongs to the MurCDEF family.

The protein resides in the cytoplasm. The catalysed reaction is UDP-N-acetyl-alpha-D-muramate + L-alanine + ATP = UDP-N-acetyl-alpha-D-muramoyl-L-alanine + ADP + phosphate + H(+). It functions in the pathway cell wall biogenesis; peptidoglycan biosynthesis. Its function is as follows. Cell wall formation. This chain is UDP-N-acetylmuramate--L-alanine ligase, found in Coxiella burnetii (strain Dugway 5J108-111).